We begin with the raw amino-acid sequence, 124 residues long: Holo-[acyl-carrier-protein] synthase (124 aa).

Asp8 and Glu56 together coordinate Mg(2+).

Belongs to the P-Pant transferase superfamily. AcpS family. It depends on Mg(2+) as a cofactor.

It is found in the cytoplasm. It catalyses the reaction apo-[ACP] + CoA = holo-[ACP] + adenosine 3',5'-bisphosphate + H(+). Its function is as follows. Transfers the 4'-phosphopantetheine moiety from coenzyme A to a Ser of acyl-carrier-protein. This Maridesulfovibrio salexigens (strain ATCC 14822 / DSM 2638 / NCIMB 8403 / VKM B-1763) (Desulfovibrio salexigens) protein is Holo-[acyl-carrier-protein] synthase.